A 200-amino-acid chain; its full sequence is MIASVRGVVTATGPDHAVLEVGGVGLAVQCAPGTIADLRVGQPARLATSLVVREDSLTLYGFADDDAKALFELLQTASGVGPRLAQAVLAVHPPEAVRAAIANADTAALTRVPGIGKKGAERLVLELRDRIGPVPVGADSAAGVTTGAWPEQVRQALVGLGWTAAQADQAVTAVAETVDGAVPPVPVLLRQAIRLLGRTR.

The interval 1-63 (MIASVRGVVT…EDSLTLYGFA (63 aa)) is domain I. The tract at residues 64-142 (DDDAKALFEL…PVPVGADSAA (79 aa)) is domain II. The interval 143–151 (GVTTGAWPE) is flexible linker. Residues 151–200 (EQVRQALVGLGWTAAQADQAVTAVAETVDGAVPPVPVLLRQAIRLLGRTR) are domain III.

This sequence belongs to the RuvA family. In terms of assembly, homotetramer. Forms an RuvA(8)-RuvB(12)-Holliday junction (HJ) complex. HJ DNA is sandwiched between 2 RuvA tetramers; dsDNA enters through RuvA and exits via RuvB. An RuvB hexamer assembles on each DNA strand where it exits the tetramer. Each RuvB hexamer is contacted by two RuvA subunits (via domain III) on 2 adjacent RuvB subunits; this complex drives branch migration. In the full resolvosome a probable DNA-RuvA(4)-RuvB(12)-RuvC(2) complex forms which resolves the HJ.

It is found in the cytoplasm. The RuvA-RuvB-RuvC complex processes Holliday junction (HJ) DNA during genetic recombination and DNA repair, while the RuvA-RuvB complex plays an important role in the rescue of blocked DNA replication forks via replication fork reversal (RFR). RuvA specifically binds to HJ cruciform DNA, conferring on it an open structure. The RuvB hexamer acts as an ATP-dependent pump, pulling dsDNA into and through the RuvAB complex. HJ branch migration allows RuvC to scan DNA until it finds its consensus sequence, where it cleaves and resolves the cruciform DNA. This is Holliday junction branch migration complex subunit RuvA from Salinispora tropica (strain ATCC BAA-916 / DSM 44818 / JCM 13857 / NBRC 105044 / CNB-440).